Consider the following 653-residue polypeptide: Endoglin (653 aa).

The signal sequence occupies residues 1 to 24; that stretch reads MDRGVLPQAIALLLAVCSFGPTAG. Topologically, residues 25–581 are extracellular; the sequence is LAEGVQCDLQ…IVSPGLPDKG (557 aa). The interval 27 to 44 is OR1, N-terminal part; sequence EGVQCDLQPVDPKVTYTT. Residues 27 to 336 are required for interaction with GDF2; it reads EGVQCDLQPV…RSCGSGLQPS (310 aa). Cystine bridges form between C31–C206, C51–C181, C241–C329, C349–C381, C362–C442, C393–C411, and C493–C549. An OR2 region spans residues 45–198; sequence SQVSEGCVAH…MGHTLEWKSH (154 aa). Residue N57 is glycosylated (N-linked (GlcNAc...) asparagine). The tract at residues 199–329 is OR1, C-terminal part; it reads TQASVLGCHL…SVISLQDRSC (131 aa). Positions 269 to 281 are essential for interaction with GDF2; it reads KAWTTGEYSFKIF. N306 carries an N-linked (GlcNAc...) asparagine glycan. The ZP domain maps to 362 to 512; that stretch reads CSDDVMTLVL…MVDLIQNQEA (151 aa). Residues 582–606 traverse the membrane as a helical segment; the sequence is LVLPAVLGITFGAFLIGALLTAALW. Topologically, residues 607–653 are cytoplasmic; that stretch reads YIHSHTRHPGKREPVVAVAAPASSESSSTNHSIGSTQSTPCSTSSMA. Over residues 625–634 the composition is skewed to low complexity; sequence AAPASSESSS. The disordered stretch occupies residues 625 to 653; sequence AAPASSESSSTNHSIGSTQSTPCSTSSMA. Residues 635–653 show a composition bias toward polar residues; sequence TNHSIGSTQSTPCSTSSMA. Phosphoserine; by TGFBR1 is present on residues S641 and S644.

Homodimer; disulfide-linked. Forms a heteromeric complex with the signaling receptors for transforming growth factor-beta: TGFBR1 and/or TGFBR2. It is able to bind TGFB1 and TGFB2 with high affinity, but not TGFB3. Interacts with GDF2, forming a heterotetramer with a 2:2 stoichiometry. Interacts with ACVRL1. Can form a heteromeric complex with GDF2 and ACVRL1. Interacts with BMP10. Interacts with DYNLT4. Interacts with ARRB2.

It is found in the cell membrane. Vascular endothelium glycoprotein that plays an important role in the regulation of angiogenesis. Required for normal structure and integrity of adult vasculature. Regulates the migration of vascular endothelial cells. Required for normal extraembryonic angiogenesis and for embryonic heart development. May regulate endothelial cell shape changes in response to blood flow, which drive vascular remodeling and establishment of normal vascular morphology during angiogenesis. May play a role in the binding of endothelial cells to integrins. Acts as a TGF-beta coreceptor and is involved in the TGF-beta/BMP signaling cascade that ultimately leads to the activation of SMAD transcription factors. Required for GDF2/BMP9 signaling through SMAD1 in endothelial cells and modulates TGFB1 signaling through SMAD3. The polypeptide is Endoglin (ENG) (Sus scrofa (Pig)).